The sequence spans 477 residues: Phosphomethylpyrimidine synthase (477 aa).

Substrate contacts are provided by residues Asn-67, Met-96, Tyr-125, His-160, 180-182, 221-224, and Glu-260; these read SRG and DGLR. Zn(2+) is bound at residue His-264. Tyr-287 provides a ligand contact to substrate. Position 328 (His-328) interacts with Zn(2+). Residues Cys-408, Cys-411, and Cys-416 each coordinate [4Fe-4S] cluster. Residues 427–440 are compositionally biased toward basic and acidic residues; sequence AGDGMDGLESRTDL. Residues 427-477 form a disordered region; it reads AGDGMDGLESRTDLDSSAAAAVNRPPTGVHRAEKLDDIPCPVAEDDVAADD.

Belongs to the ThiC family. Requires [4Fe-4S] cluster as cofactor.

The enzyme catalyses 5-amino-1-(5-phospho-beta-D-ribosyl)imidazole + S-adenosyl-L-methionine = 4-amino-2-methyl-5-(phosphooxymethyl)pyrimidine + CO + 5'-deoxyadenosine + formate + L-methionine + 3 H(+). Its pathway is cofactor biosynthesis; thiamine diphosphate biosynthesis. Catalyzes the synthesis of the hydroxymethylpyrimidine phosphate (HMP-P) moiety of thiamine from aminoimidazole ribotide (AIR) in a radical S-adenosyl-L-methionine (SAM)-dependent reaction. The polypeptide is Phosphomethylpyrimidine synthase (Natronomonas pharaonis (strain ATCC 35678 / DSM 2160 / CIP 103997 / JCM 8858 / NBRC 14720 / NCIMB 2260 / Gabara) (Halobacterium pharaonis)).